We begin with the raw amino-acid sequence, 204 residues long: Ras-related and estrogen-regulated growth inhibitor-like protein (204 aa).

Residues 1–204 form a small GTPase-like region; that stretch reads MNDVKLTVLG…NVFGKRRKSV (204 aa). GTP contacts are provided by residues 10–17, 57–63, and 122–125; these read GGEGTGKS, DPCSQPQ, and NKQD.

The protein belongs to the small GTPase superfamily. Ras family.

The catalysed reaction is GTP + H2O = GDP + phosphate + H(+). In terms of biological role, binds GDP/GTP and may possess intrinsic GTPase activity. The sequence is that of Ras-related and estrogen-regulated growth inhibitor-like protein (RERGL) from Bos taurus (Bovine).